We begin with the raw amino-acid sequence, 108 residues long: MAASCLLRQGRAGALKTMLQEAQVFRGLASTVSLSAESGKSEKGQPQNSKKQSPPKKPAPVPAEPFDNSTYKNLQHHDYSTYTFLDLNLELSKFRMPQPSSGRESPRH.

The N-terminal 34 residues, 1-34 (MAASCLLRQGRAGALKTMLQEAQVFRGLASTVSL), are a transit peptide targeting the mitochondrion. Residues 33-72 (SLSAESGKSEKGQPQNSKKQSPPKKPAPVPAEPFDNSTYK) are disordered. Serine 105 carries the phosphoserine modification.

It belongs to the complex I NDUFV3 subunit family. As to quaternary structure, complex I is composed of 45 different subunits. This is a component of the flavoprotein-sulfur (FP) fragment of the enzyme.

The protein localises to the mitochondrion inner membrane. Functionally, accessory subunit of the mitochondrial membrane respiratory chain NADH dehydrogenase (Complex I), that is believed not to be involved in catalysis. Complex I functions in the transfer of electrons from NADH to the respiratory chain. The immediate electron acceptor for the enzyme is believed to be ubiquinone. May be the terminally assembled subunit of Complex I. This chain is NADH dehydrogenase [ubiquinone] flavoprotein 3, mitochondrial (NDUFV3), found in Gorilla gorilla gorilla (Western lowland gorilla).